Reading from the N-terminus, the 398-residue chain is Membrane-spanning 4-domains subfamily A member 18 (398 aa).

4 consecutive transmembrane segments (helical) span residues 156–176, 178–198, 218–238, and 251–271; these read LGAI…NPVL, YYPF…SYIV, SISF…IIIT, and AVSG…CVVS. A disordered region spans residues 316–346; it reads TGPVSATNGPVNTTIHPVNTTTSPVNTTTSP. Polar residues predominate over residues 319 to 331; sequence VSATNGPVNTTIH. Over residues 332-346 the composition is skewed to low complexity; the sequence is PVNTTTSPVNTTTSP.

This sequence belongs to the MS4A family.

It is found in the membrane. The chain is Membrane-spanning 4-domains subfamily A member 18 (MS4A18) from Homo sapiens (Human).